Here is a 251-residue protein sequence, read N- to C-terminus: Triosephosphate isomerase (251 aa).

Residue 10–12 coordinates substrate; sequence NWK. The active-site Electrophile is the H99. Residue E167 is the Proton acceptor of the active site. Substrate-binding positions include G173, S211, and 232–233; that span reads GG.

The protein belongs to the triosephosphate isomerase family. In terms of assembly, homodimer.

It is found in the cytoplasm. The catalysed reaction is D-glyceraldehyde 3-phosphate = dihydroxyacetone phosphate. The protein operates within carbohydrate biosynthesis; gluconeogenesis. Its pathway is carbohydrate degradation; glycolysis; D-glyceraldehyde 3-phosphate from glycerone phosphate: step 1/1. Involved in the gluconeogenesis. Catalyzes stereospecifically the conversion of dihydroxyacetone phosphate (DHAP) to D-glyceraldehyde-3-phosphate (G3P). In Neisseria meningitidis serogroup A / serotype 4A (strain DSM 15465 / Z2491), this protein is Triosephosphate isomerase.